The following is a 269-amino-acid chain: MVRIAVAGAAGRMGRNLVKAAHHNPVAKVAAGSERPESSLVGVDLGELCGEGKFDVVVCDDLAKQIDQFDVIIDFTAPASTLNNLALCQQYGKSIVIGTTGFTEEQREQIDLVAQQVPVVMAPNYSVGVNLVFKLLEKAAKVMGDYCDIEIVEAHHRHKVDAPSGTAIGMGEAIAGAMGNKLSDVAVYAREGITGERTKDEIGFATIRAGDIVGEHTAMFADIGERVEITHKATDRMTFANGAVKAAVWLHEKPAGFYTMTDVLGLNDL.

NAD(+)-binding positions include 8–13 and Glu-34; that span reads GAAGRM. Arg-35 contacts NADP(+). NAD(+) contacts are provided by residues 98-100 and 122-125; these read GTT and APNY. Residue His-155 is the Proton donor/acceptor of the active site. (S)-2,3,4,5-tetrahydrodipicolinate is bound at residue His-156. Catalysis depends on Lys-159, which acts as the Proton donor. 165–166 contributes to the (S)-2,3,4,5-tetrahydrodipicolinate binding site; the sequence is GT.

It belongs to the DapB family.

Its subcellular location is the cytoplasm. The enzyme catalyses (S)-2,3,4,5-tetrahydrodipicolinate + NAD(+) + H2O = (2S,4S)-4-hydroxy-2,3,4,5-tetrahydrodipicolinate + NADH + H(+). The catalysed reaction is (S)-2,3,4,5-tetrahydrodipicolinate + NADP(+) + H2O = (2S,4S)-4-hydroxy-2,3,4,5-tetrahydrodipicolinate + NADPH + H(+). Its pathway is amino-acid biosynthesis; L-lysine biosynthesis via DAP pathway; (S)-tetrahydrodipicolinate from L-aspartate: step 4/4. In terms of biological role, catalyzes the conversion of 4-hydroxy-tetrahydrodipicolinate (HTPA) to tetrahydrodipicolinate. This chain is 4-hydroxy-tetrahydrodipicolinate reductase, found in Vibrio vulnificus (strain CMCP6).